The primary structure comprises 164 residues: Putative 4-hydroxy-4-methyl-2-oxoglutarate aldolase (164 aa).

Residues 80-83 and arginine 102 each bind substrate; that span reads GGNL. Aspartate 103 is an a divalent metal cation binding site.

This sequence belongs to the class II aldolase/RraA-like family. In terms of assembly, homotrimer. A divalent metal cation is required as a cofactor.

The enzyme catalyses 4-hydroxy-4-methyl-2-oxoglutarate = 2 pyruvate. It catalyses the reaction oxaloacetate + H(+) = pyruvate + CO2. Functionally, catalyzes the aldol cleavage of 4-hydroxy-4-methyl-2-oxoglutarate (HMG) into 2 molecules of pyruvate. Also contains a secondary oxaloacetate (OAA) decarboxylase activity due to the common pyruvate enolate transition state formed following C-C bond cleavage in the retro-aldol and decarboxylation reactions. In Burkholderia multivorans (strain ATCC 17616 / 249), this protein is Putative 4-hydroxy-4-methyl-2-oxoglutarate aldolase.